A 307-amino-acid chain; its full sequence is Recombination-associated protein RdgC (307 aa).

This sequence belongs to the RdgC family.

It localises to the cytoplasm. The protein resides in the nucleoid. In terms of biological role, may be involved in recombination. In Colwellia psychrerythraea (strain 34H / ATCC BAA-681) (Vibrio psychroerythus), this protein is Recombination-associated protein RdgC.